Consider the following 212-residue polypeptide: Large ribosomal subunit protein uL3 (212 aa).

Positions 136 to 155 (THGNSLSHRSNGSIGQNQTP) are disordered. Gln-153 is subject to N5-methylglutamine.

It belongs to the universal ribosomal protein uL3 family. Part of the 50S ribosomal subunit. Forms a cluster with proteins L14 and L19. In terms of processing, methylated by PrmB.

Functionally, one of the primary rRNA binding proteins, it binds directly near the 3'-end of the 23S rRNA, where it nucleates assembly of the 50S subunit. The polypeptide is Large ribosomal subunit protein uL3 (Shewanella oneidensis (strain ATCC 700550 / JCM 31522 / CIP 106686 / LMG 19005 / NCIMB 14063 / MR-1)).